The sequence spans 119 residues: MSEDDVDNSVKDFESGEENEESIGRVILPNKKKGEMFGIVEKMEGASRLSVMCEDGYTRNARIPGRMRKRMWIREKDLVIVKPWEFQPEKADVVYRYTKTQASYLSRNHMLPEVIDIFK.

Residues 1 to 24 form a disordered region; it reads MSEDDVDNSVKDFESGEENEESIG. Residues 24 to 98 enclose the S1-like domain; sequence GRVILPNKKK…EKADVVYRYT (75 aa).

Belongs to the eIF-1A family.

Its function is as follows. Seems to be required for maximal rate of protein biosynthesis. Enhances ribosome dissociation into subunits and stabilizes the binding of the initiator Met-tRNA(I) to 40 S ribosomal subunits. This Thermoplasma acidophilum (strain ATCC 25905 / DSM 1728 / JCM 9062 / NBRC 15155 / AMRC-C165) protein is Translation initiation factor 1A (eIF1A).